A 176-amino-acid polypeptide reads, in one-letter code: MSAATKKRYITNKVGSEFYELAEEDIIAQVRQSRGNNLHEVLDQNGDSYVVSMPTKFRKAVWLRRDQFVVVRPIAEGDKVKGEIEYILDQDNVLYIRELGKWPSCFEEHALKMTREAKRGKANDKMIDDDMLPPSESEEEDDESEDEIEDTYDEDEETDDEEFDTYNPNRMQAPSK.

Residues 5–89 (TKKRYITNKV…VKGEIEYILD (85 aa)) form the S1-like domain. Over residues 117–128 (AKRGKANDKMID) the composition is skewed to basic and acidic residues. Positions 117–176 (AKRGKANDKMIDDDMLPPSESEEEDDESEDEIEDTYDEDEETDDEEFDTYNPNRMQAPSK) are disordered. Acidic residues predominate over residues 129 to 164 (DDMLPPSESEEEDDESEDEIEDTYDEDEETDDEEFD). Positions 166–176 (YNPNRMQAPSK) are enriched in polar residues.

It belongs to the EIF1AD family.

In Caenorhabditis briggsae, this protein is Probable RNA-binding protein EIF1AD.